The following is a 458-amino-acid chain: ATP synthase subunit beta (458 aa).

Residue 148 to 155 (GGAGVGKT) participates in ATP binding.

It belongs to the ATPase alpha/beta chains family. F-type ATPases have 2 components, CF(1) - the catalytic core - and CF(0) - the membrane proton channel. CF(1) has five subunits: alpha(3), beta(3), gamma(1), delta(1), epsilon(1). CF(0) has three main subunits: a(1), b(2) and c(9-12). The alpha and beta chains form an alternating ring which encloses part of the gamma chain. CF(1) is attached to CF(0) by a central stalk formed by the gamma and epsilon chains, while a peripheral stalk is formed by the delta and b chains.

Its subcellular location is the cell inner membrane. The enzyme catalyses ATP + H2O + 4 H(+)(in) = ADP + phosphate + 5 H(+)(out). Functionally, produces ATP from ADP in the presence of a proton gradient across the membrane. The catalytic sites are hosted primarily by the beta subunits. In Shewanella piezotolerans (strain WP3 / JCM 13877), this protein is ATP synthase subunit beta.